The chain runs to 457 residues: Protein unc-93 homolog A (457 aa).

Transmembrane regions (helical) follow at residues 8 to 28, 42 to 62, 65 to 85, 86 to 106, and 140 to 160; these read VLVV…LQSL, ALST…PLLI, LGCK…SVGN, FFAS…GAAP, and IFFL…SLVF. N-linked (GlcNAc...) asparagine glycosylation occurs at N190. 6 helical membrane-spanning segments follow: residues 202–222, 257–277, 291–311, 320–340, 344–364, and 395–415; these read TLLG…AAFL, LCLL…LSSE, FVGY…VLYG, AVLY…LLLW, ADHL…DAVW, and FVIA…YILL.

The protein belongs to the unc-93 family. Expressed in testis, small intestine, spleen, prostate and ovary.

The protein localises to the cell membrane. The sequence is that of Protein unc-93 homolog A (UNC93A) from Homo sapiens (Human).